Reading from the N-terminus, the 309-residue chain is Golgi-associated RAB2 interactor protein 1A (309 aa).

Phosphoserine occurs at positions 231, 263, and 267.

The protein belongs to the GARIN family. As to quaternary structure, interacts (via N-terminus) with RAB2B (in GTP-bound form).

It is found in the golgi apparatus. Functionally, RAB2B effector protein required for accurate acrosome formation and normal male fertility. In Homo sapiens (Human), this protein is Golgi-associated RAB2 interactor protein 1A.